The following is a 140-amino-acid chain: Large ribosomal subunit protein bL17 (140 aa).

This sequence belongs to the bacterial ribosomal protein bL17 family. As to quaternary structure, part of the 50S ribosomal subunit. Contacts protein L32.

This chain is Large ribosomal subunit protein bL17, found in Rhizorhabdus wittichii (strain DSM 6014 / CCUG 31198 / JCM 15750 / NBRC 105917 / EY 4224 / RW1) (Sphingomonas wittichii).